Here is a 283-residue protein sequence, read N- to C-terminus: Undecaprenyl-diphosphatase (283 aa).

8 consecutive transmembrane segments (helical) span residues 4–24 (LLIL…FLPI), 45–65 (ADLF…YEYW), 91–111 (QLGL…FTLA), 118–138 (LFNP…IFYV), 153–173 (VSLK…IPGT), 194–214 (AEFS…LDLL), 228–248 (ILGV…RWLV), and 258–278 (IFAW…WIFG).

The protein belongs to the UppP family.

Its subcellular location is the cell inner membrane. The enzyme catalyses di-trans,octa-cis-undecaprenyl diphosphate + H2O = di-trans,octa-cis-undecaprenyl phosphate + phosphate + H(+). Functionally, catalyzes the dephosphorylation of undecaprenyl diphosphate (UPP). Confers resistance to bacitracin. The chain is Undecaprenyl-diphosphatase from Psychrobacter sp. (strain PRwf-1).